The primary structure comprises 164 residues: Interferon gamma (164 aa).

Residues 1–19 (MTCQTYNLFVLSVIMIYYG) form the signal peptide. Residues asparagine 42 and asparagine 61 are each glycosylated (N-linked (GlcNAc...) asparagine).

This sequence belongs to the type II (or gamma) interferon family. As to quaternary structure, homodimer.

The protein localises to the secreted. Produced by lymphocytes activated by specific antigens or mitogens. IFN-gamma, in addition to having antiviral activity, has important immunoregulatory functions. It is a potent activator of macrophages, it has antiproliferative effects on transformed cells and it can potentiate the antiviral and antitumor effects of the type I interferons. The protein is Interferon gamma (IFNG) of Gallus gallus (Chicken).